The chain runs to 252 residues: uncharacterized protein (252 aa).

The protein resides in the plastid. It localises to the chloroplast. This is an uncharacterized protein from Guillardia theta (Cryptophyte).